Here is a 152-residue protein sequence, read N- to C-terminus: Protein eva-1 homolog A (152 aa).

A necessary for the localization and biological activity region spans residues 1 to 60; sequence MRLPLSHSPEHVEMALLSNILAAYSFVSENPERAALYFVSGVCIGLVLTLAALVIRISCH. The helical transmembrane segment at 35-55 threads the bilayer; sequence ALYFVSGVCIGLVLTLAALVI. The segment at 70–97 is disordered; sequence KFLQDRESSSDSSDSEDGSEDTVSDLSV. Residues 82–92 are compositionally biased toward acidic residues; the sequence is SDSEDGSEDTV. Phosphothreonine is present on T106. S114 carries the post-translational modification Phosphoserine; by FAM20C.

The protein belongs to the EVA1 family. As to expression, expressed in lung, kidney, liver, pancreas, placenta, but not in heart and skeletal muscle.

It is found in the endoplasmic reticulum membrane. It localises to the lysosome membrane. Acts as a regulator of programmed cell death, mediating both autophagy and apoptosis. In Homo sapiens (Human), this protein is Protein eva-1 homolog A (EVA1A).